The following is a 147-amino-acid chain: Hemoglobin subunit beta (147 aa).

The Globin domain maps to 3-147 (HWTAEEKQLI…VAHALARKYH (145 aa)). Heme b contacts are provided by histidine 64 and histidine 93.

This sequence belongs to the globin family. As to quaternary structure, heterotetramer of two alpha chains and two beta chains. As to expression, red blood cells.

In terms of biological role, involved in oxygen transport from the lung to the various peripheral tissues. The chain is Hemoglobin subunit beta (HBB) from Cairina moschata (Muscovy duck).